Consider the following 307-residue polypeptide: Peroxisomal membrane protein PMP34 (307 aa).

Residues 1-9 (MASVLSYES) lie on the Cytoplasmic side of the membrane. Residues 1-147 (MASVLSYESL…NEDIIPTNYK (147 aa)) form a necessary for targeting to peroxisomes and interaction with PEX19 region. Solcar repeat units lie at residues 7–92 (YESL…LKAV), 99–192 (SSTG…LKRQ), and 200–294 (LSSL…LTAA). A helical transmembrane segment spans residues 10-30 (LVHAVAGAVGSVTAMTVFFPL). At 31-66 (DTARLRLQVDEKRKSKTTHAVLLEIIKEEGLLAPYR) the chain is on the lumenal side. Residues 67–87 (GWFPVISSLCCSNFVYFYTFN) form a helical membrane-spanning segment. The Cytoplasmic portion of the chain corresponds to 88-104 (SLKAVWVKGQRSSTGKD). The chain crosses the membrane as a helical span at residues 105 to 125 (LVVGFVAGVVNVLLTTPLWVV). Topologically, residues 126-160 (NTRLKLQGAKFRNEDIIPTNYKGIIDAFHQIIRDE) are lumenal. Residues 161–181 (GILALWNGTFPSLLLVFNPAI) traverse the membrane as a helical segment. At 182–202 (QFMFYEGLKRQLLKKRMKLSS) the chain is on the cytoplasmic side. The Peroxisome localization signal motif lies at 190 to 199 (KRQLLKKRMK). Residues 203–223 (LDVFIIGAIAKAIATTVTYPM) traverse the membrane as a helical segment. Residues 224–280 (QTVQSILRFGRHRLNPENRTLGSLRNVLSLLHQRVKRFGIMGLYKGLEAKLLQTVLT) are Lumenal-facing. A necessary for targeting to peroxisomes and interaction with PEX19 region spans residues 244 to 307 (LGSLRNVLSL…VMGLKSTHKH (64 aa)). The helical transmembrane segment at 281–301 (AALMFLVYEKLTAATFTVMGL) threads the bilayer. Topologically, residues 302-307 (KSTHKH) are cytoplasmic.

This sequence belongs to the mitochondrial carrier (TC 2.A.29) family. In terms of assembly, interacts (via N- and C-terminus peroxisomal targeting regions) with PEX19; the interaction occurs with the newly synthesized SLC25A17 in the cytosol. Expressed in liver, kidney, heart, spleen, muscle and lung.

Its subcellular location is the cytoplasm. It is found in the peroxisome membrane. It catalyses the reaction AMP(out) + CoA(in) = AMP(in) + CoA(out). The enzyme catalyses 3'-dephospho-CoA(in) + AMP(out) = 3'-dephospho-CoA(out) + AMP(in). It carries out the reaction acetyl-CoA(in) + AMP(out) = acetyl-CoA(out) + AMP(in). The catalysed reaction is AMP(in) + NAD(+)(out) = AMP(out) + NAD(+)(in). It catalyses the reaction FAD(in) + AMP(out) = FAD(out) + AMP(in). The enzyme catalyses FMN(in) + AMP(out) = FMN(out) + AMP(in). It carries out the reaction AMP(in) + ADP(out) = AMP(out) + ADP(in). The catalysed reaction is adenosine 3',5'-bisphosphate(in) + AMP(out) = adenosine 3',5'-bisphosphate(out) + AMP(in). It catalyses the reaction FAD(in) + CoA(out) = FAD(out) + CoA(in). The enzyme catalyses FAD(in) + adenosine 3',5'-bisphosphate(out) = FAD(out) + adenosine 3',5'-bisphosphate(in). It carries out the reaction FMN(in) + CoA(out) = FMN(out) + CoA(in). The catalysed reaction is FMN(in) + adenosine 3',5'-bisphosphate(out) = FMN(out) + adenosine 3',5'-bisphosphate(in). It catalyses the reaction FAD(out) + NAD(+)(in) = FAD(in) + NAD(+)(out). The enzyme catalyses FMN(out) + NAD(+)(in) = FMN(in) + NAD(+)(out). It carries out the reaction NAD(+)(in) + CoA(out) = NAD(+)(out) + CoA(in). The catalysed reaction is adenosine 3',5'-bisphosphate(out) + NAD(+)(in) = adenosine 3',5'-bisphosphate(in) + NAD(+)(out). It catalyses the reaction FMN(out) + ADP(in) = FMN(in) + ADP(out). The enzyme catalyses FAD(out) + ADP(in) = FAD(in) + ADP(out). It carries out the reaction ADP(out) + CoA(in) = ADP(in) + CoA(out). The catalysed reaction is adenosine 3',5'-bisphosphate(in) + ADP(out) = adenosine 3',5'-bisphosphate(out) + ADP(in). Functionally, peroxisomal transporter for multiple cofactors like coenzyme A (CoA), flavin adenine dinucleotide (FAD), flavin mononucleotide (FMN) and nucleotide adenosine monophosphate (AMP), and to a lesser extent for nicotinamide adenine dinucleotide (NAD(+)), adenosine diphosphate (ADP) and adenosine 3',5'-diphosphate (PAP). May catalyze the transport of free CoA, FAD and NAD(+) from the cytosol into the peroxisomal matrix by a counter-exchange mechanism. In Mus musculus (Mouse), this protein is Peroxisomal membrane protein PMP34 (Slc25a17).